Reading from the N-terminus, the 87-residue chain is UPF0248 protein TSIB_1445 (87 aa).

The protein belongs to the UPF0248 family.

The polypeptide is UPF0248 protein TSIB_1445 (Thermococcus sibiricus (strain DSM 12597 / MM 739)).